We begin with the raw amino-acid sequence, 358 residues long: MFVDIHTSSKQYKAEVGSGILREAGKTIEALAPASSYLIVSDENVANRYLDVLVSSFSKEPHTFVVKAGEQSKSFHVYEQLAAFCLEKQLDRQSVIIAFGGGVVGDLAGFVAGTYMRGVRFIQVPTTLLAHDSSVGGKVAVNLPAAKNMIGVFHQPEAVLFDTELLATLPEHEWRSGFAEIVKLGFIADASFLAWLRETVPALTSIKADNLQKMVAKAIAIKADIVGKDEKEHGIRAHLNFGHTLAHAIEAELGYGKITHGEAVAIGMRFAFRLSLRFTKEDLRLADYEEWFSALGYDLRLPAGLSAQRLLARMKSDKKTNAGKIVMVLLAQLGAAYTKTVDEHLLLELLEEELGGRS.

NAD(+) is bound by residues 102 to 106 (GVVGD), 126 to 127 (TT), Lys-138, and Lys-147. Zn(2+) is bound by residues Glu-180, His-243, and His-260.

This sequence belongs to the sugar phosphate cyclases superfamily. Dehydroquinate synthase family. Requires Co(2+) as cofactor. Zn(2+) serves as cofactor. NAD(+) is required as a cofactor.

The protein resides in the cytoplasm. The catalysed reaction is 7-phospho-2-dehydro-3-deoxy-D-arabino-heptonate = 3-dehydroquinate + phosphate. The protein operates within metabolic intermediate biosynthesis; chorismate biosynthesis; chorismate from D-erythrose 4-phosphate and phosphoenolpyruvate: step 2/7. Functionally, catalyzes the conversion of 3-deoxy-D-arabino-heptulosonate 7-phosphate (DAHP) to dehydroquinate (DHQ). This Shouchella clausii (strain KSM-K16) (Alkalihalobacillus clausii) protein is 3-dehydroquinate synthase.